Reading from the N-terminus, the 406-residue chain is MNQPLKPNSFRAGPDEDGRFGIFGGRFVAETLMPLILDLQDEWNKAKNDPVFKAELEKLGAHYIGRPSPLYFAERLTAELGGAKIYFKREELNHTGSHKINNCIGQILLAKRMGKTRIIAETGAGQHGVASATVAARFGLPCVVYMGATDVERQAPNVFRMKLLGAEVKPVTAGHGTLKDAMNEALRDWVTNVDSTYYLIGTAAGPHPYPEMVRDFQAVIGQEAKEQLLAAEGRLPDLVVAAVGGGSNAIGIFHPFLDDDGVRIVGVEAGGKGLDGDEHCASITAGSPGVLHGNRTYLLQDGDGQIKEGHSISAGLDYPGIGPEHAWLNDIGRVEYVPIMDHEALEAFQTLTRLEGIIPALEPSHALAEVIKRAPKMGKDEIILMNLSGRGDKDIFTVGKILGMGQ.

Lys-99 carries the N6-(pyridoxal phosphate)lysine modification.

Belongs to the TrpB family. Tetramer of two alpha and two beta chains. Pyridoxal 5'-phosphate is required as a cofactor.

It catalyses the reaction (1S,2R)-1-C-(indol-3-yl)glycerol 3-phosphate + L-serine = D-glyceraldehyde 3-phosphate + L-tryptophan + H2O. Its pathway is amino-acid biosynthesis; L-tryptophan biosynthesis; L-tryptophan from chorismate: step 5/5. Its function is as follows. The beta subunit is responsible for the synthesis of L-tryptophan from indole and L-serine. The chain is Tryptophan synthase beta chain from Sinorhizobium fredii (strain NBRC 101917 / NGR234).